The sequence spans 235 residues: Glycerol-3-phosphate acyltransferase (235 aa).

6 consecutive transmembrane segments (helical) span residues 4 to 24 (LIAI…IMAG), 56 to 76 (AVTL…VAFF), 94 to 114 (LLAG…GFKG), 122 to 142 (AGML…IFLL), 152 to 172 (VASI…KYIF), and 191 to 211 (FHDS…LAIL).

This sequence belongs to the PlsY family. Probably interacts with PlsX.

Its subcellular location is the cell inner membrane. It carries out the reaction an acyl phosphate + sn-glycerol 3-phosphate = a 1-acyl-sn-glycero-3-phosphate + phosphate. Its pathway is lipid metabolism; phospholipid metabolism. Catalyzes the transfer of an acyl group from acyl-phosphate (acyl-PO(4)) to glycerol-3-phosphate (G3P) to form lysophosphatidic acid (LPA). This enzyme utilizes acyl-phosphate as fatty acyl donor, but not acyl-CoA or acyl-ACP. This Chlorobium phaeobacteroides (strain DSM 266 / SMG 266 / 2430) protein is Glycerol-3-phosphate acyltransferase.